A 279-amino-acid chain; its full sequence is MKRIFLFLATNIAVLVVINIVLAVLGINSRGGAGSLLAYSAVVGFTGSIISLLMSKFIAKQSVGAEVIDTPRTEEEAWLLNTVEAQARQWNLKTPEVAIYHSPEPNAFATGASRNSSLIAVSTGLLDHMTRDEVEAVLAHEMAHVGNGDMVTLTLIQGVVNTFVVFLSRIIANLIARNNDGSQSQGTYFLVSMVFQILFGFLASLIVMWFSRQREYRADAGAAKLVGAPKMISALQRLKGNPVDLPEEMNAMGIAGDTRDSLLSTHPSLDNRIARLKSL.

2 consecutive transmembrane segments (helical) span residues 4-24 (IFLF…VLAV) and 34-54 (GSLL…SLLM). Histidine 140 contacts Zn(2+). Glutamate 141 is an active-site residue. Residue histidine 144 coordinates Zn(2+). 2 helical membrane-spanning segments follow: residues 155-175 (LIQG…ANLI) and 189-209 (FLVS…IVMW). Glutamate 215 serves as a coordination point for Zn(2+).

This sequence belongs to the peptidase M48B family. It depends on Zn(2+) as a cofactor.

Its subcellular location is the cell inner membrane. This Neisseria gonorrhoeae (strain ATCC 700825 / FA 1090) protein is Protease HtpX homolog.